The following is a 230-amino-acid chain: Triosephosphate isomerase (230 aa).

A substrate-binding site is contributed by 9–11 (NYK). His-93 functions as the Electrophile in the catalytic mechanism. The Proton acceptor role is filled by Glu-141. Residues Ile-146, Gly-180, and 201–202 (AS) contribute to the substrate site.

The protein belongs to the triosephosphate isomerase family. Homotetramer; dimer of dimers.

It localises to the cytoplasm. It carries out the reaction D-glyceraldehyde 3-phosphate = dihydroxyacetone phosphate. It participates in carbohydrate biosynthesis; gluconeogenesis. The protein operates within carbohydrate degradation; glycolysis; D-glyceraldehyde 3-phosphate from glycerone phosphate: step 1/1. Its function is as follows. Involved in the gluconeogenesis. Catalyzes stereospecifically the conversion of dihydroxyacetone phosphate (DHAP) to D-glyceraldehyde-3-phosphate (G3P). In Sulfolobus acidocaldarius (strain ATCC 33909 / DSM 639 / JCM 8929 / NBRC 15157 / NCIMB 11770), this protein is Triosephosphate isomerase.